The chain runs to 229 residues: Peptidase E (229 aa).

Residues Ser120, Asp135, and His157 each act as charge relay system in the active site.

The protein belongs to the peptidase S51 family.

The protein localises to the cytoplasm. The enzyme catalyses Dipeptidase E catalyzes the hydrolysis of dipeptides Asp-|-Xaa. It does not act on peptides with N-terminal Glu, Asn or Gln, nor does it cleave isoaspartyl peptides.. Hydrolyzes dipeptides containing N-terminal aspartate residues. May play a role in allowing the cell to use peptide aspartate to spare carbon otherwise required for the synthesis of the aspartate family of amino acids. The sequence is that of Peptidase E from Citrobacter koseri (strain ATCC BAA-895 / CDC 4225-83 / SGSC4696).